The primary structure comprises 180 residues: Large ribosomal subunit protein uL5 (180 aa).

The protein belongs to the universal ribosomal protein uL5 family. Part of the 50S ribosomal subunit; part of the 5S rRNA/L5/L18/L25 subcomplex. Contacts the 5S rRNA and the P site tRNA. Forms a bridge to the 30S subunit in the 70S ribosome.

Functionally, this is one of the proteins that bind and probably mediate the attachment of the 5S RNA into the large ribosomal subunit, where it forms part of the central protuberance. In the 70S ribosome it contacts protein S13 of the 30S subunit (bridge B1b), connecting the 2 subunits; this bridge is implicated in subunit movement. Contacts the P site tRNA; the 5S rRNA and some of its associated proteins might help stabilize positioning of ribosome-bound tRNAs. This Lactobacillus helveticus (strain DPC 4571) protein is Large ribosomal subunit protein uL5.